The primary structure comprises 318 residues: Transaldolase (318 aa).

The active-site Schiff-base intermediate with substrate is Lys-131.

This sequence belongs to the transaldolase family. Type 1 subfamily. As to quaternary structure, homodimer.

The protein localises to the cytoplasm. The catalysed reaction is D-sedoheptulose 7-phosphate + D-glyceraldehyde 3-phosphate = D-erythrose 4-phosphate + beta-D-fructose 6-phosphate. Its pathway is carbohydrate degradation; pentose phosphate pathway; D-glyceraldehyde 3-phosphate and beta-D-fructose 6-phosphate from D-ribose 5-phosphate and D-xylulose 5-phosphate (non-oxidative stage): step 2/3. Transaldolase is important for the balance of metabolites in the pentose-phosphate pathway. This chain is Transaldolase, found in Buchnera aphidicola subsp. Cinara cedri (strain Cc).